We begin with the raw amino-acid sequence, 275 residues long: Probable siderophore transport system ATP-binding protein YusV (275 aa).

In terms of domain architecture, ABC transporter spans 6-242 (ISTETLSLGY…DLVQNVFSMN (237 aa)). 38 to 45 (GSNGCGKS) serves as a coordination point for ATP.

The protein belongs to the ABC transporter superfamily. As to quaternary structure, the iron-hydroxamate siderophore complex is composed of one ATP-binding protein (YusV), two transmembrane proteins (YfiZ and YfhA) and a solute-binding protein (YfiY); the catechoplate siderophore complex is composed of one ATP-binding protein (YusV), two transmembrane proteins (FeuB and FeuC) and a solute-binding protein (FeuA).

It is found in the cell membrane. In terms of biological role, provides the ATPase subunit for at least 2 ABC transporter complexes; YfiYZ/YfhA/YusV involved in import of the iron-hydroxamate siderophores schizokinen, arthrobactin and corprogen, and FeuABC/YusV involved in import of the catecholate siderophores bacillibactin and enterobactin. Probably responsible for energy coupling to the transport system. The polypeptide is Probable siderophore transport system ATP-binding protein YusV (yusV) (Bacillus subtilis (strain 168)).